Here is a 46-residue protein sequence, read N- to C-terminus: Esculentin-1A (46 aa).

Cysteine 40 and cysteine 46 are joined by a disulfide.

The protein belongs to the frog skin active peptide (FSAP) family. Brevinin subfamily. As to expression, expressed by the skin glands.

The protein resides in the secreted. Its function is as follows. Shows antibacterial activity against representative Gram-negative and Gram-positive bacterial species, and hemolytic activity. This is Esculentin-1A from Pelophylax lessonae (Pool frog).